The primary structure comprises 75 residues: Xibalbin-13 2 (75 aa).

The first 27 residues, 1 to 27 (MKEANTRRYIYLCLVVVLLSIIITTEA), serve as a signal peptide directing secretion. Residues 28 to 30 (EDD) constitute a propeptide that is removed on maturation. 4 disulfide bridges follow: cysteine 34-cysteine 49, cysteine 41-cysteine 54, cysteine 48-cysteine 65, and cysteine 56-cysteine 63.

The protein belongs to the xibalbin-13 family. In terms of tissue distribution, expressed by the venom gland and the whole body.

The protein localises to the secreted. Functionally, probable neurotoxin. Strongly inhibits voltage-gated potassium channels (Kv1.1/KCNA1, Kv1.2/KCNA2, Kv1.3/KCNA3, and Kv1.6/KCNA6, with the highest toxicity against Kv1.1 (85.1% inhibition at 1 uM)) and mildly inhibits sodium channels (Nav1.2/SCN2A, Nav1.4/SCN4A, Nav1.5/SCN5A, Nav1.6/SCN8A, and BgNav). Induces activation of protein kinase A type II (PKA-II) and MAP kinase Erk1/2 in primary nociceptive and non-nociceptive sensory neurons. Does not show cytotoxic activity. Does not have an impact on Ca2+, cAMP, and NO signaling in the cell types analyzed. Does not interfere with the adhesion of leukocytes to endothelial cells. The protein is Xibalbin-13 2 of Xibalbanus tulumensis (Blind cave remipede).